Reading from the N-terminus, the 339-residue chain is Anthranilate phosphoribosyltransferase (339 aa).

Residues Gly-79, 82–83 (GD), Ser-87, 89–92 (NIST), 107–115 (KHGNRSISS), and Ser-119 contribute to the 5-phospho-alpha-D-ribose 1-diphosphate site. Gly-79 is an anthranilate binding site. Ser-91 is a Mg(2+) binding site. Asn-110 provides a ligand contact to anthranilate. Residue Arg-165 participates in anthranilate binding. Positions 224 and 225 each coordinate Mg(2+).

It belongs to the anthranilate phosphoribosyltransferase family. As to quaternary structure, homodimer. Mg(2+) serves as cofactor.

The enzyme catalyses N-(5-phospho-beta-D-ribosyl)anthranilate + diphosphate = 5-phospho-alpha-D-ribose 1-diphosphate + anthranilate. It functions in the pathway amino-acid biosynthesis; L-tryptophan biosynthesis; L-tryptophan from chorismate: step 2/5. In terms of biological role, catalyzes the transfer of the phosphoribosyl group of 5-phosphorylribose-1-pyrophosphate (PRPP) to anthranilate to yield N-(5'-phosphoribosyl)-anthranilate (PRA). This chain is Anthranilate phosphoribosyltransferase, found in Listeria monocytogenes serotype 4a (strain HCC23).